The primary structure comprises 55 residues: uncharacterized protein (55 aa).

A signal peptide spans 1-19 (MQILLVVRLVLLWLGGLSA).

This is an uncharacterized protein from Orgyia pseudotsugata multicapsid polyhedrosis virus (OpMNPV).